The chain runs to 489 residues: Rhamnulokinase (489 aa).

ATP is bound at residue 13-17 (ASSGR). Cys-68 and Cys-222 form a disulfide bridge. Substrate-binding positions include Gly-83 and 236 to 238 (HDT). The Proton acceptor role is filled by Asp-237. Thr-259 contributes to the ATP binding site. Position 296 (Asn-296) interacts with substrate. Residue Gln-304 coordinates ATP. Cys-353 and Cys-370 are oxidised to a cystine. Residue Gly-402 coordinates ATP. A disulfide bond links Cys-413 and Cys-417.

The protein belongs to the rhamnulokinase family. The cofactor is Mg(2+).

It carries out the reaction L-rhamnulose + ATP = L-rhamnulose 1-phosphate + ADP + H(+). It functions in the pathway carbohydrate degradation; L-rhamnose degradation; glycerone phosphate from L-rhamnose: step 2/3. In terms of biological role, involved in the catabolism of L-rhamnose (6-deoxy-L-mannose). Catalyzes the transfer of the gamma-phosphate group from ATP to the 1-hydroxyl group of L-rhamnulose to yield L-rhamnulose 1-phosphate. In Salmonella schwarzengrund (strain CVM19633), this protein is Rhamnulokinase.